The primary structure comprises 184 residues: Photosystem I assembly protein Ycf4 (184 aa).

2 consecutive transmembrane segments (helical) span residues 19-39 (ISNL…FLVG) and 57-77 (IIFF…LFIS).

Belongs to the Ycf4 family.

The protein resides in the plastid thylakoid membrane. Its function is as follows. Seems to be required for the assembly of the photosystem I complex. This chain is Photosystem I assembly protein Ycf4, found in Cuscuta exaltata (Tall dodder).